The following is a 716-amino-acid chain: DNA ligase (716 aa).

NAD(+) contacts are provided by residues 47 to 51 (DATYD), 96 to 97 (SL), and E130. Residue K132 is the N6-AMP-lysine intermediate of the active site. The NAD(+) site is built by R153, E190, K306, and K330. Positions 435, 438, 453, and 459 each coordinate Zn(2+). Positions 638–716 (RSDSAVAGKT…EDEWLKLIEG (79 aa)) constitute a BRCT domain.

It belongs to the NAD-dependent DNA ligase family. LigA subfamily. The cofactor is Mg(2+). Requires Mn(2+) as cofactor.

The enzyme catalyses NAD(+) + (deoxyribonucleotide)n-3'-hydroxyl + 5'-phospho-(deoxyribonucleotide)m = (deoxyribonucleotide)n+m + AMP + beta-nicotinamide D-nucleotide.. Functionally, DNA ligase that catalyzes the formation of phosphodiester linkages between 5'-phosphoryl and 3'-hydroxyl groups in double-stranded DNA using NAD as a coenzyme and as the energy source for the reaction. It is essential for DNA replication and repair of damaged DNA. The chain is DNA ligase from Nitrobacter winogradskyi (strain ATCC 25391 / DSM 10237 / CIP 104748 / NCIMB 11846 / Nb-255).